Here is a 268-residue protein sequence, read N- to C-terminus: 4-hydroxy-tetrahydrodipicolinate reductase (268 aa).

NAD(+) is bound by residues 10 to 15 (GASGRM) and Asp-36. Residue Arg-37 coordinates NADP(+). NAD(+)-binding positions include 99–101 (GTT) and 123–126 (SANM). Residue His-156 is the Proton donor/acceptor of the active site. A (S)-2,3,4,5-tetrahydrodipicolinate-binding site is contributed by His-157. Lys-160 serves as the catalytic Proton donor. 166 to 167 (GT) is a binding site for (S)-2,3,4,5-tetrahydrodipicolinate.

The protein belongs to the DapB family.

The protein localises to the cytoplasm. The enzyme catalyses (S)-2,3,4,5-tetrahydrodipicolinate + NAD(+) + H2O = (2S,4S)-4-hydroxy-2,3,4,5-tetrahydrodipicolinate + NADH + H(+). It carries out the reaction (S)-2,3,4,5-tetrahydrodipicolinate + NADP(+) + H2O = (2S,4S)-4-hydroxy-2,3,4,5-tetrahydrodipicolinate + NADPH + H(+). The protein operates within amino-acid biosynthesis; L-lysine biosynthesis via DAP pathway; (S)-tetrahydrodipicolinate from L-aspartate: step 4/4. Its function is as follows. Catalyzes the conversion of 4-hydroxy-tetrahydrodipicolinate (HTPA) to tetrahydrodipicolinate. The polypeptide is 4-hydroxy-tetrahydrodipicolinate reductase (Burkholderia thailandensis (strain ATCC 700388 / DSM 13276 / CCUG 48851 / CIP 106301 / E264)).